A 696-amino-acid chain; its full sequence is Polyribonucleotide nucleotidyltransferase (696 aa).

Residues Asp-489 and Asp-495 each coordinate Mg(2+). In terms of domain architecture, KH spans 556 to 615; that stretch reads PQYVTMKINPEKIRDVIGKGGVVIREITEATNCAIDISDDGTIKIAAHTTEEGEAAKRRI. Residues 625–693 enclose the S1 motif domain; the sequence is GKVYEGTVVK…RQGRVRLSMK (69 aa).

This sequence belongs to the polyribonucleotide nucleotidyltransferase family. Component of the RNA degradosome, which is a multiprotein complex involved in RNA processing and mRNA degradation. It depends on Mg(2+) as a cofactor.

It is found in the cytoplasm. It carries out the reaction RNA(n+1) + phosphate = RNA(n) + a ribonucleoside 5'-diphosphate. Functionally, involved in mRNA degradation. Catalyzes the phosphorolysis of single-stranded polyribonucleotides processively in the 3'- to 5'-direction. The sequence is that of Polyribonucleotide nucleotidyltransferase from Coxiella burnetii (strain RSA 331 / Henzerling II).